The chain runs to 186 residues: Spermidine N(1)-acetyltransferase (186 aa).

One can recognise an N-acetyltransferase domain in the interval 7 to 167 (VKLRPLERED…NAIRMCIFQH (161 aa)). Residues Met-30, Glu-35, Glu-43, and 51 to 54 (HIHD) each bind spermine. Position 35 (Glu-35) interacts with Mg(2+). The spermidine site is built by Glu-35 and Glu-43. Glu-76 is a binding site for Mg(2+). Spermine is bound at residue 85 to 87 (EFQ). Residues 88-90 (III), 95-101 (QGKGLAT), and 128-137 (NEKAIHIYRK) contribute to the acetyl-CoA site. Tyr-135 (proton donor) is an active-site residue.

The protein belongs to the acetyltransferase family. In terms of assembly, homododecamer.

It is found in the cytoplasm. It carries out the reaction an alkane-alpha,omega-diamine + acetyl-CoA = an N-acetylalkane-alpha,omega-diamine + CoA + H(+). The catalysed reaction is spermidine + acetyl-CoA = N(1)-acetylspermidine + CoA + H(+). It catalyses the reaction spermidine + acetyl-CoA = N(8)-acetylspermidine + CoA + H(+). The enzyme catalyses spermine + acetyl-CoA = N(1)-acetylspermine + CoA + H(+). The protein operates within amine and polyamine degradation; spermidine degradation. It functions in the pathway amine and polyamine degradation; spermine degradation. Functionally, involved in the protection against polyamine toxicity by regulating their concentration. Catalyzes the transfer of an acetyl group from acetyl coenzyme A (AcCoA) to the primary amino groups of spermidine to yield N(1)- and N(8)-acetylspermidine. It can also use spermine. The sequence is that of Spermidine N(1)-acetyltransferase (speG) from Escherichia coli O157:H7.